A 416-amino-acid chain; its full sequence is Putative competence-damage inducible protein (416 aa).

The protein belongs to the CinA family.

The chain is Putative competence-damage inducible protein from Levilactobacillus brevis (strain ATCC 367 / BCRC 12310 / CIP 105137 / JCM 1170 / LMG 11437 / NCIMB 947 / NCTC 947) (Lactobacillus brevis).